The sequence spans 556 residues: MKPSRGLSLTDLVNHDDAPPLNNGDNNVKQEEVQAENLATNPASVLAPGPVIVDTLPPVEAPVSTSDTGNTSHTGAAPQTAVTAESDETDTDDEPGEIVFENTKFRFDDEEQQPQKDKLVKGTSSEKKDKQVNAATKEIQLDSKPVKEQSPKTKDEGDIPVEDADKADNKVETQKKENGIKQEVEPVEQDGKKSVEPAKQSKEDSKKEKDIFQQKTSNASVKNNIKKDLKILSELSSSSLPKRYNVPPIWARKWKPTVKALQAIDSSNLKLDDSILGFIPEDDLTKSVQDWIYATLIAVEPELRQFIEVEMKYGLIIDPSTSNRVNPPVSSQCVFTDLDSTMKPDVDERVFDEFNRYIKNLSELNENMGKFNIIDSHASDLSYRVRTHTERPKFLRMTRDVNTGRIAQFIEKRKISQILLYSPKDSYDTKISISLELPVPENDPPEKYKNHTPTGHRLKKRTSYIHNDSCTRFDITRVENKPIRVNNKNEKEPESDTTYEVELEINTPALLNAFDNIQHDSKEYAAIVRTFLNNGTIVRRKLSSLSYDIYKGSNKL.

2 disordered regions span residues 1-28 and 56-217; these read MKPS…DNNV and LPPV…QKTS. Polar residues predominate over residues 63–74; that stretch reads VSTSDTGNTSHT. A compositionally biased stretch (acidic residues) spans 85-96; that stretch reads ESDETDTDDEPG. 2 stretches are compositionally biased toward basic and acidic residues: residues 103-131 and 139-212; these read TKFR…KDKQ and IQLD…KDIF.

This sequence belongs to the fungal TPase family. In terms of assembly, heterodimer. The mRNA-capping enzyme is composed of two separate chains alpha and beta, respectively a mRNA guanylyltransferase and an mRNA 5'-triphosphate monophosphatase. Mg(2+) serves as cofactor.

Its subcellular location is the nucleus. It catalyses the reaction a 5'-end triphospho-ribonucleoside in mRNA + H2O = a 5'-end diphospho-ribonucleoside in mRNA + phosphate + H(+). First step of mRNA capping. Converts the 5'-triphosphate end of a nascent mRNA chain into a diphosphate end. The chain is mRNA-capping enzyme subunit beta (CET1) from Kluyveromyces lactis (strain ATCC 8585 / CBS 2359 / DSM 70799 / NBRC 1267 / NRRL Y-1140 / WM37) (Yeast).